Consider the following 230-residue polypeptide: Ureidoacrylate amidohydrolase RutB (230 aa).

Residue Asp24 is the Proton acceptor of the active site. Lys133 is a catalytic residue. Cys166 (nucleophile) is an active-site residue.

It belongs to the isochorismatase family. RutB subfamily.

The catalysed reaction is (Z)-3-ureidoacrylate + H2O + H(+) = (Z)-3-aminoacrylate + NH4(+) + CO2. It carries out the reaction (Z)-3-ureidoacrylate + H2O = (Z)-3-aminoacrylate + carbamate + H(+). It catalyses the reaction (Z)-2-methylureidoacrylate + H2O + H(+) = (Z)-2-methylaminoacrylate + NH4(+) + CO2. Its function is as follows. Hydrolyzes ureidoacrylate to form aminoacrylate and carbamate. The carbamate hydrolyzes spontaneously, thereby releasing one of the nitrogen atoms of the pyrimidine ring as ammonia and one of its carbon atoms as CO2. In Escherichia coli O127:H6 (strain E2348/69 / EPEC), this protein is Ureidoacrylate amidohydrolase RutB.